A 352-amino-acid chain; its full sequence is Chymopapain (352 aa).

The N-terminal stretch at Met1–Ile18 is a signal peptide. The propeptide at Ile19 to Asn134 is activation peptide. Asn86 carries an N-linked (GlcNAc...) asparagine glycan. 3 cysteine pairs are disulfide-bonded: Cys156-Cys197, Cys190-Cys229, and Cys287-Cys338. Cys159 is an active-site residue. Residues His293 and Asn313 contribute to the active site.

It belongs to the peptidase C1 family.

It catalyses the reaction Specificity similar to that of papain.. Its function is as follows. Cysteine proteinase with a high level of diversity in substrate specificity. This Carica papaya (Papaya) protein is Chymopapain.